The sequence spans 432 residues: MLRFAPSPTGDMHIGNLRVAIFNYIVSKQRKEDLVIRIEDTDKDRNIEGKDKEILDILNLFGIDYSVVMYQSENFRFHRAMALQLLQDKRAFNCFCSSDWLDKKREEAKNSKTAYRYDDACASLPDELVIDNEHPFTVRIRKPLEPIIIKDHIKGEIKFEPNDIDSFIIMRQDKTPMYNFACAVDDMLSDISLVIRGEDHVSNTPKQILIREALGYSKNIEYAHLPIILNDDGKKMSKRDDASSVKWLLEEGYLPSAIANYLILIGNKPPKEIFTIQEAIEWFSLENISKSPARFDINMLKHVNKEHLKILDAKELSRYVGFADAQIGEVAKIYLEEASTTKELRAKIALIFAEKNIPDEFKEYAQTIVKIIQKAPYFEEYEDFKNYIIQESGLKGKNFFKPLRILLMGSEHGPDIATVYKHIKNYLGEIVK.

The short motif at 6-16 (PSPTGDMHIGN) is the 'HIGH' region element. A 'KMSKS' region motif is present at residues 235–239 (KMSKR). Lysine 238 is a binding site for ATP.

It belongs to the class-I aminoacyl-tRNA synthetase family. Glutamate--tRNA ligase type 1 subfamily. As to quaternary structure, monomer.

It localises to the cytoplasm. It carries out the reaction tRNA(Glu) + L-glutamate + ATP = L-glutamyl-tRNA(Glu) + AMP + diphosphate. In terms of biological role, catalyzes the attachment of glutamate to tRNA(Glu) in a two-step reaction: glutamate is first activated by ATP to form Glu-AMP and then transferred to the acceptor end of tRNA(Glu). This Sulfurimonas denitrificans (strain ATCC 33889 / DSM 1251) (Thiomicrospira denitrificans (strain ATCC 33889 / DSM 1251)) protein is Glutamate--tRNA ligase 2.